A 186-amino-acid polypeptide reads, in one-letter code: MRIGLFGGSFDPIHLGHLLAASQAQEVLCLDRVLFVVAARPPHKVPVAPAEARYEMTLLAVAEDPRFTVSRLELDRPGPSYTVDTLRKARRLFPQDELFFITGADAYRDVLTWKEGERLPEYATLVAVARPGYPLEEAPLPVVPLFVPEVGISSTEIRRRLKEGRSVRYWVPRAVEVYIEKHGLYR.

It belongs to the NadD family.

It carries out the reaction nicotinate beta-D-ribonucleotide + ATP + H(+) = deamido-NAD(+) + diphosphate. Its pathway is cofactor biosynthesis; NAD(+) biosynthesis; deamido-NAD(+) from nicotinate D-ribonucleotide: step 1/1. Catalyzes the reversible adenylation of nicotinate mononucleotide (NaMN) to nicotinic acid adenine dinucleotide (NaAD). In Thermus thermophilus (strain ATCC BAA-163 / DSM 7039 / HB27), this protein is Probable nicotinate-nucleotide adenylyltransferase.